Consider the following 309-residue polypeptide: Glutaminase (309 aa).

Substrate-binding residues include S64, N114, E160, N167, Y191, Y243, and V261.

Belongs to the glutaminase family. As to quaternary structure, homotetramer.

It carries out the reaction L-glutamine + H2O = L-glutamate + NH4(+). In Agrobacterium fabrum (strain C58 / ATCC 33970) (Agrobacterium tumefaciens (strain C58)), this protein is Glutaminase.